The chain runs to 356 residues: MSTVTITDLARENVRNLTPYQSARRLGGNGDVWLNANEYPTAVEFQLTQQTLNRYPECQPKAVIENYAQYAGVKPEQVLVSRGADEGIELLIRAFCEPGKDAILYCPPTYGMYSVSAETIGVECRTVPTQDNWQLDLQGISDKLDGVKVVYVCSPNNPTGQLINPQDFRTLLELTRGKAIVVADEAYIEFCPQASLAGWLTEYPHLAILRTLSKAFALAGLRCGFTLANEEVINLLMKVIAPYPLSTPVADIAAQALSPQGIVAMRERVTQIIAEREYLIAALKEIPCVEQVFDSATNYILARFKASSAVFKSLWDQGIILRDQNKQPSLSGCLRITVGTREESQRVIDALRAEQV.

Lys214 carries the post-translational modification N6-(pyridoxal phosphate)lysine.

This sequence belongs to the class-II pyridoxal-phosphate-dependent aminotransferase family. Histidinol-phosphate aminotransferase subfamily. As to quaternary structure, homodimer. It depends on pyridoxal 5'-phosphate as a cofactor.

It carries out the reaction L-histidinol phosphate + 2-oxoglutarate = 3-(imidazol-4-yl)-2-oxopropyl phosphate + L-glutamate. Its pathway is amino-acid biosynthesis; L-histidine biosynthesis; L-histidine from 5-phospho-alpha-D-ribose 1-diphosphate: step 7/9. In Shigella sonnei (strain Ss046), this protein is Histidinol-phosphate aminotransferase.